The primary structure comprises 675 residues: Zinc finger CCCH domain-containing protein 65 (675 aa).

The interval 294-320 (TFSNEAKMDPGTSIKKRSAPSKDAKAR) is disordered. Positions 307–320 (IKKRSAPSKDAKAR) are enriched in basic residues. Positions 314 to 342 (SKDAKARKRAKARIKRAQERIALGVKKLK) form a coiled coil. 3 C3H1-type zinc fingers span residues 350 to 377 (PKPI…HDTI), 384 to 406 (PCCY…HDLS), and 409 to 432 (PCNN…HKGT). Disordered stretches follow at residues 487–572 (LKPS…LPLG) and 586–612 (EQKT…SHIQ). Residues 490–504 (SSHSNQRNSSDASSS) are compositionally biased toward low complexity. A compositionally biased stretch (polar residues) spans 543-567 (KASSASKPNTDNSDSQTLKQSQQGS). Positions 586–595 (EQKTLNREPQ) are enriched in basic and acidic residues. Positions 597-612 (PASSKNLKTTPSSHIQ) are enriched in polar residues.

Its function is as follows. Possesses RNA-binding and ribonuclease activities in vitro. This is Zinc finger CCCH domain-containing protein 65 (EMB1789) from Arabidopsis thaliana (Mouse-ear cress).